The chain runs to 110 residues: uncharacterized protein (110 aa).

The segment at 38–62 is disordered; that stretch reads SVQQNARAEEAEAAAPPAEEDSLPD.

This is an uncharacterized protein from Mus musculus (Mouse).